The primary structure comprises 324 residues: MSFLQALSIFLLLLLYVVVGSAEQCGRQAGGALCPGGLCCSQFGWCGSTADYCTVPGCQSQCSGSGPAPGPGGLTNLISRETFNQMLLHRNDGACPARGFYTYDAFIAAARSFPAFATTGDQATRKREIAAFLAQTSHETTGGAGWAAPDGPYAWGYCYNRELNPPSSYCASDPNYPCAPGKQYFGRGPMQLSWNYNYGQCGRAIGVDLLNNPDLLSSDPTISFKSAFWFWMTPQSPKPSCHNVIIGAWSPSSSDRAAGRVPGYGVITNIINGGLECGKGWNAQVEDRIGFYKRYCDILGVSYGNNLDCYNQSPFGNGVSVDSM.

An N-terminal signal peptide occupies residues 1 to 22 (MSFLQALSIFLLLLLYVVVGSA). The Chitin-binding type-1 domain occupies 23–64 (EQCGRQAGGALCPGGLCCSQFGWCGSTADYCTVPGCQSQCSG). 7 cysteine pairs are disulfide-bonded: Cys-25-Cys-40, Cys-34-Cys-46, Cys-39-Cys-53, Cys-58-Cys-62, Cys-95-Cys-158, Cys-170-Cys-178, and Cys-277-Cys-309. Glu-139 acts as the Proton donor in catalysis. Positions 318 to 324 (GVSVDSM) are cleaved as a propeptide — removed in mature form.

It belongs to the glycosyl hydrolase 19 family. Chitinase class I subfamily.

The enzyme catalyses Random endo-hydrolysis of N-acetyl-beta-D-glucosaminide (1-&gt;4)-beta-linkages in chitin and chitodextrins.. Functionally, defense against chitin-containing fungal pathogens. In Gossypium hirsutum (Upland cotton), this protein is Endochitinase 1.